Consider the following 607-residue polypeptide: UvrABC system protein C (607 aa).

The region spanning 14–93 is the GIY-YIG domain; it reads HKPGVYLMLD…IKKHKPRYNI (80 aa). The region spanning 203-238 is the UVR domain; the sequence is RDLLAELKRQMLQASERLNFEQAGQFRDQIRALKTT.

Belongs to the UvrC family. In terms of assembly, interacts with UvrB in an incision complex.

It is found in the cytoplasm. In terms of biological role, the UvrABC repair system catalyzes the recognition and processing of DNA lesions. UvrC both incises the 5' and 3' sides of the lesion. The N-terminal half is responsible for the 3' incision and the C-terminal half is responsible for the 5' incision. In Desulfotalea psychrophila (strain LSv54 / DSM 12343), this protein is UvrABC system protein C.